Here is a 773-residue protein sequence, read N- to C-terminus: MAQTAYLKVTRIAMRSASNLSKRRVEELNSGLGELRQLLSCVVCCQLLVDPYSPKGKRCQHNVCRLCLRGKKHLFPSCTQCEGCSDFKTYEENRMMAAQLLCYKTLCVHLLHSALFGELAGMRPQVARELVPRIKLPPKTTQEFIREGSNISDTFDIFLPQPDLPFLKDMPTSLPAETPPTSAVTTPELPYDHHLNISDIEAEAAATAEQGHFSPLPLLPTGSRMGMLSHAGQIVIATESSESGFMDQAWTDQVDLSGTVSVSKYTNSGNNFAVSYVMPTSATTKFDPQELQIGQVVQMADSTQLAVLAAVEETVETSTQLTVLSTTVEETVETSTQLEVLTSAEEPNEISDQLANLQVEESDEALVEETVEEAEGTSIPSEVVAEHMEEDQHLDVHTSQSPTQTEMEEAVEEHVATKTQLGHVQTELQDAESLQKDFEDAKAAAEEAKEKEKDLHAISAELQKEDSDEPTLKRKRTRTLKASQAAKIEPVPSEVKTKVQSGKGALRRIRGKDKEEKVKPPKPKCRCGISGSSNTLTTCRNSRCPCYKSYNSCAGCHCVCCKNPHKEDYVESDEDDDLEDFEMPKDVPEPMTQSEEPVVAEPRQEENSMAPPDSSAPISLVPLNNLQQSQHPLVLVQNEKGEYQGFNIFQGSKPLDPVTVGFTIRVQLQHTDGFGSLPQYAYIMPTIDPPNPPAPSLSPPPPPAPDREVIEPPAKKFRTSRTRRGRANFSALDTVDELVSGGSRSNSAAGDRSSATDNAHSLFEEIMSGSDDL.

Residues Cys-41, Cys-44, Cys-59, His-61, Cys-64, Cys-67, Cys-78, and Cys-84 each coordinate Zn(2+). Residues 41-85 (CVVCCQLLVDPYSPKGKRCQHNVCRLCLRGKKHLFPSCTQCEGCS) form an RING-type zinc finger. The stretch at 424-468 (VQTELQDAESLQKDFEDAKAAAEEAKEKEKDLHAISAELQKEDSD) forms a coiled coil. The disordered stretch occupies residues 460-525 (AELQKEDSDE…EKVKPPKPKC (66 aa)). Residues 520-571 (PPKPKCRCGISGSSNTLTTCRNSRCPCYKSYNSCAGCHCVCCKNPHKEDYVE) form the CXC MSL2-type domain. Residues Cys-525, Cys-527, Cys-539, Cys-544, Cys-546, Cys-553, Cys-556, Cys-558, and Cys-561 each contribute to the Zn(2+) site. Positions 571–773 (ESDEDDDLED…EEIMSGSDDL (203 aa)) are C-terminal disordered region (CTD). A compositionally biased stretch (acidic residues) spans 572-581 (SDEDDDLEDF). The segment at 572–616 (SDEDDDLEDFEMPKDVPEPMTQSEEPVVAEPRQEENSMAPPDSSA) is disordered. The clamp-binding domain (CBD) stretch occupies residues 620 to 685 (LVPLNNLQQS…SLPQYAYIMP (66 aa)). A pro/Bas region region spans residues 650 to 708 (QGSKPLDPVTVGFTIRVQLQHTDGFGSLPQYAYIMPTIDPPNPPAPSLSPPPPPAPDRE). Positions 687–704 (IDPPNPPAPSLSPPPPPA) are enriched in pro residues. The tract at residues 687-773 (IDPPNPPAPS…EEIMSGSDDL (87 aa)) is disordered. Over residues 705 to 714 (PDREVIEPPA) the composition is skewed to basic and acidic residues. Residues 715–726 (KKFRTSRTRRGR) show a composition bias toward basic residues. The segment covering 742 to 759 (GSRSNSAAGDRSSATDNA) has biased composition (polar residues).

Belongs to the MSL2 family. Component of the male-specific lethal (MSL) histone acetyltransferase complex, composed of mof, mle, msl-1, msl-2 and msl-3 proteins, as well as roX1 and roX2 non-coding RNAs. When not associated with chromatin, the MSL complex associates with msl-2 mRNAs, possibly to regulate the amount of available MSL complex. Interacts with Clamp; promoting cooperative binding to DNA PionX sites and recruitment of the MSL complex to chromatin. In terms of processing, autoubiquitinated.

It is found in the nucleus. The protein resides in the chromosome. The enzyme catalyses S-ubiquitinyl-[E2 ubiquitin-conjugating enzyme]-L-cysteine + [acceptor protein]-L-lysine = [E2 ubiquitin-conjugating enzyme]-L-cysteine + N(6)-ubiquitinyl-[acceptor protein]-L-lysine.. It participates in protein modification; protein ubiquitination. In terms of biological role, limiting component of the male-specific lethal (MSL) histone acetyltransferase complex, a multiprotein complex essential for elevating transcription of the single X chromosome in the male (X chromosome dosage compensation). The MSL complex specifically associates with the single X chromosome in males and mediates formation of H4K16ac, promoting a two-fold activation of X chromosome. Msl-2 is only produced in males, constituting the limiting component of the MSL complex. Within the MSL complex, msl-2 mediates the selective binding to the X chromosome and recruitment of the MSL complex via two different mechanisms. Recognizes DNA motifs that are enriched on X chromosome, named PionX sites, which are characterized by sequence features and distinct DNA conformation (base roll). Specific recognition of the X chromosome is also mediated by the formation of a gel-like state: msl-2 undergoes liquid-liquid phase separation upon binding to roX1 and roX2 non-coding RNAs, leading to nucleate the MSL complex on the X chromosome. Msl-2 is also required for translation and/or stability of msl-1 in males. Also acts as an E3 ubiquitin ligase: in complex with msl-1, mediates ubiquitination of histone H2B at 'Lys-34' (H2BK34Ub). Also catalyzes ubiquitination of msl-1, msl-3 and mof components of the MSL complex. The protein is E3 ubiquitin-protein ligase msl-2 of Drosophila melanogaster (Fruit fly).